The chain runs to 155 residues: Xanthine-guanine phosphoribosyltransferase (155 aa).

Residues 37 to 38 (RG) and 91 to 99 (DDLVDTGNT) each bind 5-phospho-alpha-D-ribose 1-diphosphate. Residue Asp-92 participates in Mg(2+) binding. Residues Asp-95 and Ile-138 each contribute to the guanine site. Xanthine-binding residues include Asp-95 and Ile-138. GMP is bound by residues 95 to 99 (DTGNT) and 137 to 138 (WI).

Belongs to the purine/pyrimidine phosphoribosyltransferase family. XGPT subfamily. In terms of assembly, homotetramer. Requires Mg(2+) as cofactor.

Its subcellular location is the cell inner membrane. The catalysed reaction is GMP + diphosphate = guanine + 5-phospho-alpha-D-ribose 1-diphosphate. The enzyme catalyses XMP + diphosphate = xanthine + 5-phospho-alpha-D-ribose 1-diphosphate. It carries out the reaction IMP + diphosphate = hypoxanthine + 5-phospho-alpha-D-ribose 1-diphosphate. Its pathway is purine metabolism; GMP biosynthesis via salvage pathway; GMP from guanine: step 1/1. It functions in the pathway purine metabolism; XMP biosynthesis via salvage pathway; XMP from xanthine: step 1/1. Its function is as follows. Acts on guanine, xanthine and to a lesser extent hypoxanthine. In terms of biological role, purine salvage pathway enzyme that catalyzes the transfer of the ribosyl-5-phosphate group from 5-phospho-alpha-D-ribose 1-diphosphate (PRPP) to the N9 position of the 6-oxopurines guanine and xanthine to form the corresponding ribonucleotides GMP (guanosine 5'-monophosphate) and XMP (xanthosine 5'-monophosphate), with the release of PPi. To a lesser extent, also acts on hypoxanthine. The sequence is that of Xanthine-guanine phosphoribosyltransferase from Haemophilus influenzae (strain ATCC 51907 / DSM 11121 / KW20 / Rd).